We begin with the raw amino-acid sequence, 376 residues long: uncharacterized protein (376 aa).

Residues 1-22 form the signal peptide; it reads MVATGRIIITLLAAALDEIILA.

The protein belongs to the ascovirus HvAV ORF17 family.

This is an uncharacterized protein from Heliothis virescens ascovirus 3e (HvAV-3e).